An 898-amino-acid chain; its full sequence is Putative disease resistance protein At1g63350 (898 aa).

The stretch at 24-88 forms a coiled coil; that stretch reads VSYTHNLEKN…IESRVNDLLN (65 aa). The region spanning 137 to 440 is the NB-ARC domain; the sequence is DQASTSEVEE…CEEIIDGSEG (304 aa). 179-186 contributes to the ATP binding site; sequence GMGGVGKT. LRR repeat units lie at residues 516–537, 538–559, 562–584, 586–608, 609–631, and 632–654; these read VVRR…LDCM, ELTT…FFNS, KLAV…ISEL, SLQY…QELK, KLIH…SCLH, and NLKV…KELE.

Belongs to the disease resistance NB-LRR family.

Its function is as follows. Potential disease resistance protein. This Arabidopsis thaliana (Mouse-ear cress) protein is Putative disease resistance protein At1g63350.